The sequence spans 230 residues: Transcription factor bHLH147 (230 aa).

The segment covering 1–17 has biased composition (polar residues); that stretch reads MESISPVSNQLLQPTTT. The tract at residues 1–52 is disordered; sequence MESISPVSNQLLQPTTTSSNSDRSRRKRKKKSSPSSVEKSPSPSISLEKWRS. The span at 33 to 46 shows a compositional bias: low complexity; it reads SPSSVEKSPSPSIS. Positions 147–196 constitute a bHLH domain; the sequence is KQRATVLRLKAKGLPAVQRKVKVLSRLVPGCRKQSLPVVLEETTDYIAAM. Residues 210–230 form a disordered region; the sequence is VSSSPPPPTPGHEGGQTHMLG.

As to quaternary structure, homodimer. Interacts with PRE3.

Its subcellular location is the nucleus. In terms of biological role, atypical bHLH transcription factor probably unable to bind DNA. Negatively regulates brassinosteroid signaling. The polypeptide is Transcription factor bHLH147 (BHLH147) (Arabidopsis thaliana (Mouse-ear cress)).